The sequence spans 331 residues: D-alanine--D-alanine ligase (331 aa).

Residues 112–314 enclose the ATP-grasp domain; it reads KRIWRSEGLP…YEDLCLRLLA (203 aa). Residue 138-193 participates in ATP binding; sequence LQTLGAPMIVKPAREGSTIGLSKVHQAQQCASAYLLAARYDPEVLCEQFIAGDELT. Residues Asp-267, Glu-281, and Asn-283 each coordinate Mg(2+).

Belongs to the D-alanine--D-alanine ligase family. Requires Mg(2+) as cofactor. It depends on Mn(2+) as a cofactor.

The protein localises to the cytoplasm. The catalysed reaction is 2 D-alanine + ATP = D-alanyl-D-alanine + ADP + phosphate + H(+). Its pathway is cell wall biogenesis; peptidoglycan biosynthesis. Its function is as follows. Cell wall formation. The sequence is that of D-alanine--D-alanine ligase from Verminephrobacter eiseniae (strain EF01-2).